The chain runs to 846 residues: Patched domain-containing protein 4 (846 aa).

Helical transmembrane passes span 41–61 (HPVF…LSAL), 230–250 (SILA…TATL), 265–285 (GLLG…IFFI), 293–313 (TLLG…FELL), 336–356 (VMVT…MGAS), 373–393 (VSIL…LVFA), 465–485 (PFVV…CLQI), 660–680 (PVLI…FLVI), 686–706 (FWLI…MTLW), and 718–738 (LIYT…TFVL). Residues 233–392 (ARSKVLVSLV…FSFFGSCLVF (160 aa)) enclose the SSD domain. Asn762 is a glycosylation site (N-linked (GlcNAc...) asparagine). Helical transmembrane passes span 765–785 (SFLI…FTLF) and 787–807 (CLLL…PVFL).

Belongs to the patched family.

The protein resides in the membrane. Functionally, could act as a repressor of canonical hedgehog signaling by antagonizing the effects of SMO, as suggested by down-regulation of hedgehog target genes, including GLI1, PTCH1, and PTCH2 in PTCHD4-expressing cells. This Homo sapiens (Human) protein is Patched domain-containing protein 4 (PTCHD4).